We begin with the raw amino-acid sequence, 296 residues long: 33 kDa chaperonin (296 aa).

2 cysteine pairs are disulfide-bonded: C233-C235 and C267-C270.

Belongs to the HSP33 family. In terms of processing, under oxidizing conditions two disulfide bonds are formed involving the reactive cysteines. Under reducing conditions zinc is bound to the reactive cysteines and the protein is inactive.

Its subcellular location is the cytoplasm. Its function is as follows. Redox regulated molecular chaperone. Protects both thermally unfolding and oxidatively damaged proteins from irreversible aggregation. Plays an important role in the bacterial defense system toward oxidative stress. This chain is 33 kDa chaperonin, found in Actinobacillus pleuropneumoniae serotype 3 (strain JL03).